The sequence spans 107 residues: Flagellar hook-basal body complex protein FliE (107 aa).

This sequence belongs to the FliE family.

Its subcellular location is the bacterial flagellum basal body. The protein is Flagellar hook-basal body complex protein FliE of Mesorhizobium japonicum (strain LMG 29417 / CECT 9101 / MAFF 303099) (Mesorhizobium loti (strain MAFF 303099)).